Reading from the N-terminus, the 383-residue chain is uncharacterized protein (383 aa).

Belongs to the peptidase M20 family.

This is an uncharacterized protein from Staphylococcus aureus (strain bovine RF122 / ET3-1).